A 269-amino-acid polypeptide reads, in one-letter code: Glutamate 5-kinase (269 aa).

K14 is a binding site for ATP. 3 residues coordinate substrate: S54, D141, and N157. Residues 177-178 (SD) and 219-225 (TGGMVTK) each bind ATP.

It belongs to the glutamate 5-kinase family.

The protein resides in the cytoplasm. The enzyme catalyses L-glutamate + ATP = L-glutamyl 5-phosphate + ADP. Its pathway is amino-acid biosynthesis; L-proline biosynthesis; L-glutamate 5-semialdehyde from L-glutamate: step 1/2. Functionally, catalyzes the transfer of a phosphate group to glutamate to form L-glutamate 5-phosphate. The chain is Glutamate 5-kinase from Clostridium perfringens (strain 13 / Type A).